The primary structure comprises 296 residues: 4-hydroxy-tetrahydrodipicolinate synthase (296 aa).

Thr-49 is a binding site for pyruvate. Tyr-137 acts as the Proton donor/acceptor in catalysis. Residue Lys-166 is the Schiff-base intermediate with substrate of the active site. Ile-208 serves as a coordination point for pyruvate.

It belongs to the DapA family. As to quaternary structure, homotetramer; dimer of dimers.

The protein localises to the cytoplasm. It catalyses the reaction L-aspartate 4-semialdehyde + pyruvate = (2S,4S)-4-hydroxy-2,3,4,5-tetrahydrodipicolinate + H2O + H(+). Its pathway is amino-acid biosynthesis; L-lysine biosynthesis via DAP pathway; (S)-tetrahydrodipicolinate from L-aspartate: step 3/4. Catalyzes the condensation of (S)-aspartate-beta-semialdehyde [(S)-ASA] and pyruvate to 4-hydroxy-tetrahydrodipicolinate (HTPA). The chain is 4-hydroxy-tetrahydrodipicolinate synthase from Chlorobium phaeobacteroides (strain DSM 266 / SMG 266 / 2430).